Reading from the N-terminus, the 366-residue chain is tRNA 2-selenouridine synthase (366 aa).

One can recognise a Rhodanese domain in the interval 12 to 135; sequence FLNDVPMMDA…MRTFLLDTLH (124 aa). The active-site S-selanylcysteine intermediate is the Cys95.

This sequence belongs to the SelU family. Monomer.

The enzyme catalyses 5-methylaminomethyl-2-thiouridine(34) in tRNA + selenophosphate + (2E)-geranyl diphosphate + H2O + H(+) = 5-methylaminomethyl-2-selenouridine(34) in tRNA + (2E)-thiogeraniol + phosphate + diphosphate. It catalyses the reaction 5-methylaminomethyl-2-thiouridine(34) in tRNA + (2E)-geranyl diphosphate = 5-methylaminomethyl-S-(2E)-geranyl-thiouridine(34) in tRNA + diphosphate. It carries out the reaction 5-methylaminomethyl-S-(2E)-geranyl-thiouridine(34) in tRNA + selenophosphate + H(+) = 5-methylaminomethyl-2-(Se-phospho)selenouridine(34) in tRNA + (2E)-thiogeraniol. The catalysed reaction is 5-methylaminomethyl-2-(Se-phospho)selenouridine(34) in tRNA + H2O = 5-methylaminomethyl-2-selenouridine(34) in tRNA + phosphate. Its function is as follows. Involved in the post-transcriptional modification of the uridine at the wobble position (U34) of tRNA(Lys), tRNA(Glu) and tRNA(Gln). Catalyzes the conversion of 2-thiouridine (S2U-RNA) to 2-selenouridine (Se2U-RNA). Acts in a two-step process involving geranylation of 2-thiouridine (S2U) to S-geranyl-2-thiouridine (geS2U) and subsequent selenation of the latter derivative to 2-selenouridine (Se2U) in the tRNA chain. This Pseudomonas syringae pv. syringae (strain B728a) protein is tRNA 2-selenouridine synthase.